A 120-amino-acid polypeptide reads, in one-letter code: Large ribosomal subunit protein bL21 (120 aa).

Belongs to the bacterial ribosomal protein bL21 family. Part of the 50S ribosomal subunit. Contacts protein L20.

In terms of biological role, this protein binds to 23S rRNA in the presence of protein L20. This Rhizorhabdus wittichii (strain DSM 6014 / CCUG 31198 / JCM 15750 / NBRC 105917 / EY 4224 / RW1) (Sphingomonas wittichii) protein is Large ribosomal subunit protein bL21.